Consider the following 494-residue polypeptide: Probable cytosol aminopeptidase (494 aa).

Mn(2+) is bound by residues lysine 260 and aspartate 265. Lysine 272 is a catalytic residue. Residues aspartate 283, aspartate 342, and glutamate 344 each contribute to the Mn(2+) site. The active site involves arginine 346.

It belongs to the peptidase M17 family. It depends on Mn(2+) as a cofactor.

Its subcellular location is the cytoplasm. It catalyses the reaction Release of an N-terminal amino acid, Xaa-|-Yaa-, in which Xaa is preferably Leu, but may be other amino acids including Pro although not Arg or Lys, and Yaa may be Pro. Amino acid amides and methyl esters are also readily hydrolyzed, but rates on arylamides are exceedingly low.. It carries out the reaction Release of an N-terminal amino acid, preferentially leucine, but not glutamic or aspartic acids.. Functionally, presumably involved in the processing and regular turnover of intracellular proteins. Catalyzes the removal of unsubstituted N-terminal amino acids from various peptides. The polypeptide is Probable cytosol aminopeptidase (Bacillus thuringiensis (strain Al Hakam)).